Reading from the N-terminus, the 184-residue chain is Lipocalin-15 (184 aa).

Positions 1 to 20 (MMSFLLGAILTLLWAPTAQA) are cleaved as a signal peptide. C83 and C176 are disulfide-bonded.

It belongs to the calycin superfamily. Lipocalin family.

It localises to the secreted. In Homo sapiens (Human), this protein is Lipocalin-15 (LCN15).